The following is a 188-amino-acid chain: Photosystem I assembly protein Ycf4 (188 aa).

Helical transmembrane passes span 26–48 and 63–85; these read FFWAGISTIGGVGFLLAGLSSYF and FIPQGVALLFYGVAGSTVAGYLW.

This sequence belongs to the Ycf4 family.

Its subcellular location is the cellular thylakoid membrane. Its function is as follows. Seems to be required for the assembly of the photosystem I complex. The polypeptide is Photosystem I assembly protein Ycf4 (Synechocystis sp. (strain ATCC 27184 / PCC 6803 / Kazusa)).